We begin with the raw amino-acid sequence, 282 residues long: Elongation factor Ts (282 aa).

An involved in Mg(2+) ion dislocation from EF-Tu region spans residues 79-82 (TDFV).

This sequence belongs to the EF-Ts family.

It localises to the cytoplasm. Associates with the EF-Tu.GDP complex and induces the exchange of GDP to GTP. It remains bound to the aminoacyl-tRNA.EF-Tu.GTP complex up to the GTP hydrolysis stage on the ribosome. The chain is Elongation factor Ts from Shewanella loihica (strain ATCC BAA-1088 / PV-4).